We begin with the raw amino-acid sequence, 435 residues long: uncharacterized protein (435 aa).

S-adenosyl-L-methionine-binding residues include Gln261, Tyr294, Glu318, and Asp366. Cys393 (nucleophile) is an active-site residue.

Belongs to the class I-like SAM-binding methyltransferase superfamily. RNA M5U methyltransferase family.

This is an uncharacterized protein from Bifidobacterium longum (strain NCC 2705).